We begin with the raw amino-acid sequence, 314 residues long: Lysophospholipase D GDPD1 (314 aa).

Topologically, residues Met-1–Ser-3 are extracellular. Residues Thr-4–Leu-24 traverse the membrane as a helical segment. Over Lys-25 to Asp-195 the chain is Cytoplasmic. Residues Ser-40–Leu-309 form the GP-PDE domain. Residues Glu-72, Asp-74, and His-87 each contribute to the a divalent metal cation site. A helical membrane pass occupies residues Ile-196–Leu-216. The Extracellular segment spans residues Leu-217 to Ala-314.

This sequence belongs to the glycerophosphoryl diester phosphodiesterase family. As to expression, widely expressed.

It localises to the cytoplasm. The protein localises to the membrane. Its subcellular location is the perinuclear region. It is found in the endoplasmic reticulum. It carries out the reaction 1-hexadecanoyl-sn-glycero-3-phosphocholine + H2O = 1-hexadecanoyl-sn-glycero-3-phosphate + choline + H(+). It catalyses the reaction 1-hexadecanoyl-sn-glycero-3-phosphoethanolamine + H2O = 1-hexadecanoyl-sn-glycero-3-phosphate + ethanolamine + H(+). The enzyme catalyses N-hexadecanoyl-sn-glycero-3-phosphoethanolamine + H2O = N-hexadecanoylethanolamine + sn-glycerol 3-phosphate + H(+). The catalysed reaction is N-(5Z,8Z,11Z,14Z-eicosatetraenoyl)-1-(9Z-octadecenoyl)-sn-glycero-3-phosphoethanolamine + H2O = N-(5Z,8Z,11Z,14Z-eicosatetraenoyl)-ethanolamine + 1-(9Z-octadecenoyl)-sn-glycero-3-phosphate + H(+). It carries out the reaction N,1-di-(9Z-octadecenoyl)-sn-glycero-3-phosphoethanolamine + H2O = N-(9Z-octadecenoyl) ethanolamine + 1-(9Z-octadecenoyl)-sn-glycero-3-phosphate + H(+). It catalyses the reaction N-hexadecanoyl-1-(9Z-octadecenoyl)-sn-glycero-3-phosphoethanolamine + H2O = N-hexadecanoylethanolamine + 1-(9Z-octadecenoyl)-sn-glycero-3-phosphate + H(+). The enzyme catalyses a 1-O-alkyl-sn-glycero-3-phosphocholine + H2O = a 1-O-alkyl-sn-glycero-3-phosphate + choline + H(+). The catalysed reaction is 1-O-hexadecyl-sn-glycero-3-phosphocholine + H2O = 1-O-hexadecyl-sn-glycero-3-phosphate + choline + H(+). It carries out the reaction 1-(9Z-octadecenoyl)-sn-glycero-3-phosphocholine + H2O = 1-(9Z-octadecenoyl)-sn-glycero-3-phosphate + choline + H(+). It catalyses the reaction N,1-dihexadecanoyl-sn-glycero-3-phosphoethanolamine + H2O = N-hexadecanoylethanolamine + 1-hexadecanoyl-sn-glycero-3-phosphate + H(+). The enzyme catalyses 1-O-(1Z-octadecenyl)-sn-glycero-3-phospho-(N-5Z,8Z,11Z,14Z-eicosatetraenoyl)-ethanolamine + H2O = 1-O-(1Z-octadecenyl)-sn-glycero-3-phosphate + N-(5Z,8Z,11Z,14Z-eicosatetraenoyl)-ethanolamine + H(+). The catalysed reaction is 1-O-(1Z-octadecenyl)-sn-glycero-3-phospho-(N-9Z-octadecenoyl)-ethanolamine + H2O = 1-O-(1Z-octadecenyl)-sn-glycero-3-phosphate + N-(9Z-octadecenoyl) ethanolamine + H(+). It carries out the reaction 1-O-(1Z-octadecenyl)-sn-glycero-3-phospho-N-hexadecanoyl-ethanolamine + H2O = 1-O-(1Z-octadecenyl)-sn-glycero-3-phosphate + N-hexadecanoylethanolamine + H(+). Its activity is regulated as follows. Lysophospholipase D activity is increased by magnesium and manganese and inhibited by calcium in a concentration dependent manner. Loss of lysophospholipase D activity by addition of EDTA. Hydrolyzes lysoglycerophospholipids to produce lysophosphatidic acid (LPA) and the corresponding amines. Shows a preference for 1-O-alkyl-sn-glycero-3-phosphocholine (lyso-PAF), lysophosphatidylethanolamine (lyso-PE) and lysophosphatidylcholine (lyso-PC). May be involved in bioactive N-acylethanolamine biosynthesis from both N-acyl-lysoplasmenylethanolamin (N-acyl-lysoPlsEt) and N-acyl-lysophosphatidylethanolamin (N-acyl-lysoPE). In addition, hydrolyzes glycerophospho-N-acylethanolamine to N-acylethanolamine. Does not display glycerophosphodiester phosphodiesterase activity, since it cannot hydrolyze either glycerophosphoinositol or glycerophosphocholine. The chain is Lysophospholipase D GDPD1 from Mus musculus (Mouse).